Here is a 287-residue protein sequence, read N- to C-terminus: MAGAKEIRSKIASVQNTQKITKAMEMVAASKMRKSQDRMAASRPYAETMRKVIGHLAHGNLEYKHPYLEERDVKRVGYLVVSTDRGLCGGLNINLFKKLLAEMKTWTDKGVQCDLAMIGSKGVSFFNSVGGNVVAQVTGMGDNPSLSELIGPVKVMLQAYDEGRLDKLYIVSNKFINTMSQVPTISQLLPLPASDDDDLKHKSWDYLYEPDPKALLDTLLRRYVESQVYQGVVENLASEQAARMVAMKAATDNGGSLIKELQLVYNKARQASITQELTEIVSGAAAV.

Belongs to the ATPase gamma chain family. As to quaternary structure, F-type ATPases have 2 components, CF(1) - the catalytic core - and CF(0) - the membrane proton channel. CF(1) has five subunits: alpha(3), beta(3), gamma(1), delta(1), epsilon(1). CF(0) has three main subunits: a, b and c.

It localises to the cell inner membrane. In terms of biological role, produces ATP from ADP in the presence of a proton gradient across the membrane. The gamma chain is believed to be important in regulating ATPase activity and the flow of protons through the CF(0) complex. In Escherichia coli (strain 55989 / EAEC), this protein is ATP synthase gamma chain.